The following is a 463-amino-acid chain: uncharacterized protein (463 aa).

The next 11 helical transmembrane spans lie at 6-26 (ILPV…FMLL), 31-51 (TFIS…SLSA), 60-80 (FIYA…IVSM), 101-123 (VRGP…LFFW), 130-152 (LIGA…AAMA), 189-209 (ASIP…FIMI), 242-262 (SILA…MLLF), 269-289 (ATAL…FFVY), 304-324 (GFKF…FFYL), 413-433 (AIWV…AAIC), and 443-463 (KNFI…VMML).

It localises to the cell membrane. This is an uncharacterized protein from Bacillus subtilis (strain 168).